The chain runs to 130 residues: Small ribosomal subunit protein uS9 (130 aa).

The protein belongs to the universal ribosomal protein uS9 family.

The polypeptide is Small ribosomal subunit protein uS9 (Citrobacter koseri (strain ATCC BAA-895 / CDC 4225-83 / SGSC4696)).